We begin with the raw amino-acid sequence, 443 residues long: ATP-dependent protease ATPase subunit HslU (443 aa).

ATP-binding positions include Ile-18, 60 to 65 (GVGKTE), Asp-256, Glu-321, and Arg-393.

This sequence belongs to the ClpX chaperone family. HslU subfamily. As to quaternary structure, a double ring-shaped homohexamer of HslV is capped on each side by a ring-shaped HslU homohexamer. The assembly of the HslU/HslV complex is dependent on binding of ATP.

The protein localises to the cytoplasm. In terms of biological role, ATPase subunit of a proteasome-like degradation complex; this subunit has chaperone activity. The binding of ATP and its subsequent hydrolysis by HslU are essential for unfolding of protein substrates subsequently hydrolyzed by HslV. HslU recognizes the N-terminal part of its protein substrates and unfolds these before they are guided to HslV for hydrolysis. The protein is ATP-dependent protease ATPase subunit HslU of Salmonella typhi.